Here is a 430-residue protein sequence, read N- to C-terminus: Tektin-2 (430 aa).

Coiled-coil stretches lie at residues Cys-81–Leu-162 and Phe-265–Cys-379.

This sequence belongs to the tektin family. Microtubule inner protein component of sperm flagellar doublet microtubules. May interact with CCDC172. In terms of processing, tyrosine phosphorylated. Ubiquitinated, leading to its degradation. Deubiquitinated by USP16, promoting its stability. In terms of tissue distribution, expressed in trachea multiciliated cells.

The protein resides in the cytoplasm. It is found in the cytoskeleton. It localises to the cilium axoneme. Its subcellular location is the flagellum axoneme. The protein localises to the microtubule organizing center. In terms of biological role, microtubule inner protein (MIP) part of the dynein-decorated doublet microtubules (DMTs) in cilia and flagellar axoneme. Plays a key role in the assembly or attachment of the inner dynein arm to microtubules in sperm flagella and tracheal cilia. Forms filamentous polymers in the walls of ciliary and flagellar microtubules. The polypeptide is Tektin-2 (TEKT2) (Bos taurus (Bovine)).